The primary structure comprises 401 residues: S-adenosylmethionine synthase (401 aa).

Position 137–142 (137–142) interacts with ATP; sequence GEGSGD. The disordered stretch occupies residues 272 to 305; the sequence is GTSAEQGDDGSVGRGNRSNGLITPNRSMSMEATS. Over residues 287 to 305 the composition is skewed to polar residues; that stretch reads NRSNGLITPNRSMSMEATS.

The protein belongs to the AdoMet synthase 2 family. Mg(2+) is required as a cofactor.

The catalysed reaction is L-methionine + ATP + H2O = S-adenosyl-L-methionine + phosphate + diphosphate. It participates in amino-acid biosynthesis; S-adenosyl-L-methionine biosynthesis; S-adenosyl-L-methionine from L-methionine: step 1/1. Functionally, catalyzes the formation of S-adenosylmethionine from methionine and ATP. In Natronomonas pharaonis (strain ATCC 35678 / DSM 2160 / CIP 103997 / JCM 8858 / NBRC 14720 / NCIMB 2260 / Gabara) (Halobacterium pharaonis), this protein is S-adenosylmethionine synthase.